The chain runs to 117 residues: Large ribosomal subunit protein bL20 (117 aa).

The protein belongs to the bacterial ribosomal protein bL20 family.

Its function is as follows. Binds directly to 23S ribosomal RNA and is necessary for the in vitro assembly process of the 50S ribosomal subunit. It is not involved in the protein synthesizing functions of that subunit. This chain is Large ribosomal subunit protein bL20, found in Thermomicrobium roseum (strain ATCC 27502 / DSM 5159 / P-2).